Consider the following 225-residue polypeptide: 2-C-methyl-D-erythritol 4-phosphate cytidylyltransferase (225 aa).

This sequence belongs to the IspD/TarI cytidylyltransferase family. IspD subfamily.

The catalysed reaction is 2-C-methyl-D-erythritol 4-phosphate + CTP + H(+) = 4-CDP-2-C-methyl-D-erythritol + diphosphate. It participates in isoprenoid biosynthesis; isopentenyl diphosphate biosynthesis via DXP pathway; isopentenyl diphosphate from 1-deoxy-D-xylulose 5-phosphate: step 2/6. Catalyzes the formation of 4-diphosphocytidyl-2-C-methyl-D-erythritol from CTP and 2-C-methyl-D-erythritol 4-phosphate (MEP). The polypeptide is 2-C-methyl-D-erythritol 4-phosphate cytidylyltransferase (Cereibacter sphaeroides (strain KD131 / KCTC 12085) (Rhodobacter sphaeroides)).